The primary structure comprises 69 residues: Cytochrome b-c1 complex subunit 6 (69 aa).

2 disulfide bridges follow: C17/C59 and C31/C45.

Belongs to the UQCRH/QCR6 family. As to quaternary structure, component of the ubiquinol-cytochrome c oxidoreductase (cytochrome b-c1 complex, complex III, CIII), a multisubunit enzyme composed of 3 respiratory subunits cytochrome b, cytochrome c1 and Rieske protein, 2 core protein subunits, and additional low-molecular weight protein subunits. The complex exists as an obligatory dimer and forms supercomplexes (SCs) in the inner mitochondrial membrane with cytochrome c oxidase (complex IV, CIV).

Its subcellular location is the mitochondrion inner membrane. Functionally, component of the ubiquinol-cytochrome c oxidoreductase, a multisubunit transmembrane complex that is part of the mitochondrial electron transport chain which drives oxidative phosphorylation. The respiratory chain contains 3 multisubunit complexes succinate dehydrogenase (complex II, CII), ubiquinol-cytochrome c oxidoreductase (cytochrome b-c1 complex, complex III, CIII) and cytochrome c oxidase (complex IV, CIV), that cooperate to transfer electrons derived from NADH and succinate to molecular oxygen, creating an electrochemical gradient over the inner membrane that drives transmembrane transport and the ATP synthase. The cytochrome b-c1 complex catalyzes electron transfer from ubiquinol to cytochrome c, linking this redox reaction to translocation of protons across the mitochondrial inner membrane, with protons being carried across the membrane as hydrogens on the quinol. In the process called Q cycle, 2 protons are consumed from the matrix, 4 protons are released into the intermembrane space and 2 electrons are passed to cytochrome c. The sequence is that of Cytochrome b-c1 complex subunit 6 from Solanum tuberosum (Potato).